The following is a 295-amino-acid chain: Bifunctional protein FolD (295 aa).

NADP(+) contacts are provided by residues 166-168, Ser191, and Ile232; that span reads GRS.

The protein belongs to the tetrahydrofolate dehydrogenase/cyclohydrolase family. As to quaternary structure, homodimer.

It carries out the reaction (6R)-5,10-methylene-5,6,7,8-tetrahydrofolate + NADP(+) = (6R)-5,10-methenyltetrahydrofolate + NADPH. It catalyses the reaction (6R)-5,10-methenyltetrahydrofolate + H2O = (6R)-10-formyltetrahydrofolate + H(+). The protein operates within one-carbon metabolism; tetrahydrofolate interconversion. Catalyzes the oxidation of 5,10-methylenetetrahydrofolate to 5,10-methenyltetrahydrofolate and then the hydrolysis of 5,10-methenyltetrahydrofolate to 10-formyltetrahydrofolate. This chain is Bifunctional protein FolD, found in Rhodopseudomonas palustris (strain BisB5).